The following is a 261-amino-acid chain: Lipase LipV (261 aa).

Catalysis depends on Ser87, which acts as the Nucleophile. Residues Asp217 and His240 each act as charge relay system in the active site.

This sequence belongs to the AB hydrolase superfamily.

It catalyses the reaction a carboxylic ester + H2O = an alcohol + a carboxylate + H(+). The enzyme catalyses a tetradecanoate ester + H2O = an aliphatic alcohol + tetradecanoate + H(+). The catalysed reaction is decanoate ester + H2O = decanoate + an aliphatic alcohol + H(+). It carries out the reaction an octanoate ester + H2O = an aliphatic alcohol + octanoate + H(+). It catalyses the reaction a dodecanoate ester + H2O = an aliphatic alcohol + dodecanoate + H(+). The enzyme catalyses a butanoate ester + H2O = an aliphatic alcohol + butanoate + H(+). The catalysed reaction is hexadecanoate ester + H2O = an aliphatic alcohol + hexadecanoate + H(+). It carries out the reaction octadecanoate ester + H2O = an aliphatic alcohol + octadecanoate + H(+). With respect to regulation, is inhibited by tetrahydrolipstatin, a specific lipase inhibitor and RHC 80267, a diacylglycerol lipase inhibitor, but not by phenylglyoxal and iodoacetate. Its function is as follows. Lipase that displays broad substrate specificity and preferentially hydrolyzes p-nitrophenyl myristate in vitro. Also shows significant activity with pNP-butyrate (68%), pNP-octanoate (82%), pNP-decanoate (90%), and pNP-laurate (74%). Is probably involved in lipid catabolism. Is active at low pH, and might play some important role in mycobacterial biology in macrophages where the bacteria encounters acidic stress. This chain is Lipase LipV, found in Mycobacterium tuberculosis (strain ATCC 25618 / H37Rv).